The following is a 1380-amino-acid chain: MAQTLSFNGRRRVRKFFGKIPEVAEMPNLIEVQKASYDQFLMVEEPAGGRPDEGLQAVFKSVFPIKDFSGASMLEFVSYEFEPPKFDVEECRQRDLTYAAPLKVTLRLIVFDIDEDTGAKSIKDIKEQNVYMGDMPLMTDNGTFIVNGTERVIVSQMHRSPGVFFDHDKGKSHSSGKLLFAARVIPYRGSWLDIEFDAKDIVHARIDRRRKIPVTSLLMALGMDGEEILSTFYTQSLYQRDGDGWRVPFQPDALKGQKAIAEMIDADTGEVVVEAGKKLTPRLLRQLQEKGLKALKSTDDELYGNYLAEDVVNYETGEIYLEAGDEIDEKTLPVILSAGFDEIPVLDIDHINVGAYIRNTLAADKNENRQDALFDIYRVMRPGEPPTMDSAEAMFNALFFDAERYDLSAVGRVKMNMRLDLDVPDTVRTLRKEDILAVVKMLVELRDGKGEIDDIDNLGNRRVRSVGELMENQYRLGLLRMERAIKERMSSIEIDTVMPQDLINAKPAAAAVREFFGSSQLSRFMDQVNPLSEITHKRRLSALGPGGLTRERAGFEVRDVHPTHYGRICPIETPEGPNIGLINSLATFARVNKYGFIESPYRKIVDGNVTSDVVYLSAMEDAKYHVAQANSVLNDDGSFAEEFVVCRHAGEVMLAPRDNINLMDVSPKQLVSVAAALIPFLENDDANRALMGSNMQRQAVPLLRAEAPFVGTGMESVVARDSGAAIAARRGGVVDQVDATRIVIRATEDLDPSKSGVDIYRLQKFQRSNQNTCVNQRPLVTVGDLVNKGDIIADGPSTDLGDLALGRNALVAFMPWNGYNYEDSILLSERIVRDDVFTSIHIEEFEVMARDTKLGPEEITRDIPNVSEEALKNLDEAGIVYIGAEVQPGDILVGKITPKGESPMTPEEKLLRAIFGEKASDVRDTSMRMPPGTFGTIVEVRVFNRHGVEKDERAMAIEREEIERLAKDRDDEQAILDRNVYARLIDMLRGHVAVAGPKGFKKGTELSNAVISEYPRSQWWMFAVEDEKAQGEIEALRAQYDESKSRLEQRFMDKVEKVQRGDEMPPGVMKMVKVFVAVKRKIQPGDKMAGRHGNKGVVSRIVPIEDMPFLEDGTHVDVVLNPLGVPSRMNVGQILETHLGWACAGMGKKIGAMLDAYHESGDIKPLRTTIDDVIGSGPKGEPIKQYDDESIVRLAEQTRRGVSIATPVFDGAVEADVNEMLEKAGLKVTGQSTLYDGRTGDAFDRQVTVGYIYMLKLNHLVDDKIHARSIGPYSLVTQQPLGGKAQFGGQRFGEMEVWALEAYGAAYTLQEMLTVKSDDVAGRTKVYEAIVRGDDTFEAGIPESFNVLVKEMRSLGLSVELENSKVDDLGTTAQLPDAAE.

It belongs to the RNA polymerase beta chain family. In terms of assembly, the RNAP catalytic core consists of 2 alpha, 1 beta, 1 beta' and 1 omega subunit. When a sigma factor is associated with the core the holoenzyme is formed, which can initiate transcription.

The enzyme catalyses RNA(n) + a ribonucleoside 5'-triphosphate = RNA(n+1) + diphosphate. Functionally, DNA-dependent RNA polymerase catalyzes the transcription of DNA into RNA using the four ribonucleoside triphosphates as substrates. In Sinorhizobium fredii (strain NBRC 101917 / NGR234), this protein is DNA-directed RNA polymerase subunit beta.